Consider the following 309-residue polypeptide: Elongation factor Ts (309 aa).

Positions 82 to 85 (TDFV) are involved in Mg(2+) ion dislocation from EF-Tu.

Belongs to the EF-Ts family.

The protein localises to the cytoplasm. Functionally, associates with the EF-Tu.GDP complex and induces the exchange of GDP to GTP. It remains bound to the aminoacyl-tRNA.EF-Tu.GTP complex up to the GTP hydrolysis stage on the ribosome. The chain is Elongation factor Ts from Rickettsia rickettsii (strain Iowa).